Consider the following 356-residue polypeptide: Tyrosine recombinase XerS (356 aa).

The region spanning 16 to 121 is the Core-binding (CB) domain; sequence TMPWYILEYY…ALSSLYKYLT (106 aa). Residues 169–354 enclose the Tyr recombinase domain; sequence EFLQYIDREY…VNDEQKNALN (186 aa). Residues arginine 210, lysine 234, histidine 306, arginine 309, and histidine 332 contribute to the active site. Tyrosine 341 (O-(3'-phospho-DNA)-tyrosine intermediate) is an active-site residue.

It belongs to the 'phage' integrase family. XerS subfamily.

It is found in the cytoplasm. FtsK is required for recombination. Site-specific tyrosine recombinase, which acts by catalyzing the cutting and rejoining of the recombining DNA molecules. Essential to convert dimers of the bacterial chromosome into monomers to permit their segregation at cell division. The sequence is that of Tyrosine recombinase XerS from Streptococcus gordonii (strain Challis / ATCC 35105 / BCRC 15272 / CH1 / DL1 / V288).